Reading from the N-terminus, the 498-residue chain is ATP synthase subunit beta, chloroplastic (498 aa).

An ATP-binding site is contributed by 172–179 (GGAGVGKT).

The protein belongs to the ATPase alpha/beta chains family. As to quaternary structure, F-type ATPases have 2 components, CF(1) - the catalytic core - and CF(0) - the membrane proton channel. CF(1) has five subunits: alpha(3), beta(3), gamma(1), delta(1), epsilon(1). CF(0) has four main subunits: a(1), b(1), b'(1) and c(9-12).

It is found in the plastid. It localises to the chloroplast thylakoid membrane. It carries out the reaction ATP + H2O + 4 H(+)(in) = ADP + phosphate + 5 H(+)(out). Functionally, produces ATP from ADP in the presence of a proton gradient across the membrane. The catalytic sites are hosted primarily by the beta subunits. This Montinia caryophyllacea (Wild clove bush) protein is ATP synthase subunit beta, chloroplastic.